We begin with the raw amino-acid sequence, 150 residues long: UPF0178 protein HCH_06960 (150 aa).

Belongs to the UPF0178 family.

This is UPF0178 protein HCH_06960 from Hahella chejuensis (strain KCTC 2396).